Consider the following 439-residue polypeptide: Membrane sensor protein UhpC (439 aa).

Topologically, residues 1-25 are cytoplasmic; it reads MLPFLKAPADAPLMTDKYEIDARYR. A helical membrane pass occupies residues 26–45; sequence YWRRHILLTIWLGYALFYFT. The Periplasmic portion of the chain corresponds to 46 to 66; the sequence is RKSFNAAVPEILANGVLSRSD. Residues 67-87 traverse the membrane as a helical segment; it reads IGLLATLFYITYGVSKFVSGI. Residues 88–95 are Cytoplasmic-facing; it reads VSDRSNAR. Residues 96–118 form a helical membrane-spanning segment; it reads YFMGIGLIATGIINILFGFSTSL. At 119–121 the chain is on the periplasmic side; the sequence is WAF. A helical membrane pass occupies residues 122-144; the sequence is AVLWVLNAFFQGWGSPVCARLLT. At 145-162 the chain is on the cytoplasmic side; the sequence is AWYSRTERGGWWALWNTA. Residues 163-183 traverse the membrane as a helical segment; sequence HNVGGALIPIVMAAAALHYGW. Position 184 (arginine 184) is a topological domain, periplasmic. The helical transmembrane segment at 185 to 205 threads the bilayer; the sequence is AGMMIAGCMAIVVGIFLCWRL. At 206–244 the chain is on the cytoplasmic side; sequence RDRPQALGLPAVGEWRHDALEIAQQQEGAGLTRKEILTK. The chain crosses the membrane as a helical span at residues 245–265; the sequence is YVLLNPYIWLLSFCYVLVYVV. Topologically, residues 266 to 289 are periplasmic; sequence RAAINDWGNLYMSETLGVDLVTAN. The chain crosses the membrane as a helical span at residues 290 to 310; sequence TAVTMFELGGFIGALVAGWGS. Topologically, residues 311 to 322 are cytoplasmic; sequence DKLFNGNRGPMN. Residues 323-343 traverse the membrane as a helical segment; the sequence is LIFAAGILLSVGSLWLMPFAS. Residues 344 to 349 lie on the Periplasmic side of the membrane; sequence YVMQAT. Residues 350–370 traverse the membrane as a helical segment; that stretch reads CFFTIGFFVFGPQMLIGMAAA. The Cytoplasmic segment spans residues 371–379; the sequence is ECSHKEAAG. A helical membrane pass occupies residues 380-400; that stretch reads AATGFVGLFAYLGASLAGWPL. Residues 401–410 are Periplasmic-facing; that stretch reads AKVLDTWHWS. The chain crosses the membrane as a helical span at residues 411–431; sequence GFFVVISIAAGISALLLLPFL. Residues 432-439 are Cytoplasmic-facing; sequence NAQTPREA.

Belongs to the major facilitator superfamily. Organophosphate:Pi antiporter (OPA) (TC 2.A.1.4) family.

The protein localises to the cell inner membrane. Its function is as follows. Part of the UhpABC signaling cascade that controls the expression of the hexose phosphate transporter UhpT. UhpC senses external glucose-6-phosphate and interacts with the histidine kinase UhpB, leading to the stimulation of the autokinase activity of UhpB. This is Membrane sensor protein UhpC from Escherichia coli (strain K12).